A 335-amino-acid chain; its full sequence is Ferrochelatase (335 aa).

Fe cation contacts are provided by His-207 and Glu-288.

Belongs to the ferrochelatase family.

It localises to the cytoplasm. It catalyses the reaction heme b + 2 H(+) = protoporphyrin IX + Fe(2+). The protein operates within porphyrin-containing compound metabolism; protoheme biosynthesis; protoheme from protoporphyrin-IX: step 1/1. In terms of biological role, catalyzes the ferrous insertion into protoporphyrin IX. The sequence is that of Ferrochelatase from Helicobacter pylori (strain HPAG1).